A 525-amino-acid polypeptide reads, in one-letter code: Patatin-like protein 8 (525 aa).

The interval 1 to 50 (MNRRYEKPPPLSVSSKGKKKHFVNHTAPNTPGNYERTQTSPTLSTARSHE) is disordered. A compositionally biased stretch (polar residues) spans 26–46 (TAPNTPGNYERTQTSPTLSTA). One can recognise a PNPLA domain in the interval 124-338 (LSIDGGGMRG…AMSNPTAAAI (215 aa)). Positions 128-133 (GGGMRG) match the GXGXXG motif. The Nucleophile role is filled by Ser-168.

It belongs to the patatin family. As to expression, specifically expressed in roots.

Functionally, possesses non-specific lipolytic acyl hydrolase (LAH) activity. Hydrolyzes phospholipids as well as galactolipids. May play a role in disease resistance. In Arabidopsis thaliana (Mouse-ear cress), this protein is Patatin-like protein 8 (PLP8).